Reading from the N-terminus, the 137-residue chain is ATP synthase epsilon chain 1 (137 aa).

It belongs to the ATPase epsilon chain family. In terms of assembly, F-type ATPases have 2 components, CF(1) - the catalytic core - and CF(0) - the membrane proton channel. CF(1) has five subunits: alpha(3), beta(3), gamma(1), delta(1), epsilon(1). CF(0) has three main subunits: a, b and c.

Its subcellular location is the cell inner membrane. Produces ATP from ADP in the presence of a proton gradient across the membrane. The chain is ATP synthase epsilon chain 1 (atpC1) from Ralstonia nicotianae (strain ATCC BAA-1114 / GMI1000) (Ralstonia solanacearum).